A 290-amino-acid chain; its full sequence is 4-hydroxy-tetrahydrodipicolinate synthase (290 aa).

Thr44 contributes to the pyruvate binding site. The active-site Proton donor/acceptor is the Tyr132. The Schiff-base intermediate with substrate role is filled by Lys160. Residue Ile202 coordinates pyruvate.

The protein belongs to the DapA family. In terms of assembly, homotetramer; dimer of dimers.

Its subcellular location is the cytoplasm. It catalyses the reaction L-aspartate 4-semialdehyde + pyruvate = (2S,4S)-4-hydroxy-2,3,4,5-tetrahydrodipicolinate + H2O + H(+). The protein operates within amino-acid biosynthesis; L-lysine biosynthesis via DAP pathway; (S)-tetrahydrodipicolinate from L-aspartate: step 3/4. Catalyzes the condensation of (S)-aspartate-beta-semialdehyde [(S)-ASA] and pyruvate to 4-hydroxy-tetrahydrodipicolinate (HTPA). The protein is 4-hydroxy-tetrahydrodipicolinate synthase of Ruegeria pomeroyi (strain ATCC 700808 / DSM 15171 / DSS-3) (Silicibacter pomeroyi).